A 1483-amino-acid polypeptide reads, in one-letter code: Mediator of RNA polymerase II transcription subunit 26 (1483 aa).

Residues 8 to 85 (ELTTHLSQAL…KKWREMVGIQ (78 aa)) form the TFIIS N-terminal domain. A phosphoserine mark is found at S204, S258, and S421. 5 disordered regions span residues 227–278 (SDSD…GQVA), 414–438 (HEYL…SKGV), 480–518 (VSMQ…SMNS), 541–575 (TDSD…SIQS), and 989–1041 (DKSS…MKRR). Residues 426-435 (PKRRGRKKGS) are compositionally biased toward basic residues. Positions 480–495 (VSMQSSASNLSNSSTN) are enriched in low complexity. Polar residues predominate over residues 496 to 518 (RDLPSHTTFPRQTSSCSDTSMNS). Position 541 is a phosphothreonine (T541). The span at 550–564 (PSHDSNKSQEIKECT) shows a compositional bias: basic and acidic residues. A Phosphoserine modification is found at S551. 2 stretches are compositionally biased toward polar residues: residues 565–575 (SLDSNSNSIQS) and 989–999 (DKSSNTGCQGN). Low complexity predominate over residues 1000-1011 (SPYSSSSSSSYS). A compositionally biased stretch (polar residues) spans 1020 to 1033 (ITKNLQNKNIQLNS). S1177 carries the phosphoserine modification. T1179 is subject to Phosphothreonine.

Belongs to the Mediator complex subunit 26 family. Component of the Mediator complex. Interacts with MED6 and MED17.

The protein localises to the nucleus. Functionally, component of the Mediator complex, a coactivator involved in the regulated transcription of nearly all RNA polymerase II-dependent genes. Mediator functions as a bridge to convey information from gene-specific regulatory proteins to the basal RNA polymerase II transcription machinery. Mediator is recruited to promoters by direct interactions with regulatory proteins and serves as a scaffold for the assembly of a functional preinitiation complex with RNA polymerase II and the general transcription factors. Required for activated transcription of the MtnA gene. The protein is Mediator of RNA polymerase II transcription subunit 26 (MED26) of Drosophila melanogaster (Fruit fly).